A 253-amino-acid chain; its full sequence is tRNA pseudouridine synthase A (253 aa).

Residue D53 is the Nucleophile of the active site. Y112 provides a ligand contact to substrate.

This sequence belongs to the tRNA pseudouridine synthase TruA family. In terms of assembly, homodimer.

It catalyses the reaction uridine(38/39/40) in tRNA = pseudouridine(38/39/40) in tRNA. Formation of pseudouridine at positions 38, 39 and 40 in the anticodon stem and loop of transfer RNAs. The chain is tRNA pseudouridine synthase A from Lactococcus lactis subsp. cremoris (strain SK11).